Reading from the N-terminus, the 83-residue chain is Putative membrane protein insertion efficiency factor (83 aa).

Belongs to the UPF0161 family.

Its subcellular location is the cell membrane. Its function is as follows. Could be involved in insertion of integral membrane proteins into the membrane. The chain is Putative membrane protein insertion efficiency factor from Staphylococcus saprophyticus subsp. saprophyticus (strain ATCC 15305 / DSM 20229 / NCIMB 8711 / NCTC 7292 / S-41).